We begin with the raw amino-acid sequence, 374 residues long: Arrestin domain-containing protein 15 (374 aa).

Positions 344–374 (HHLNRSKAKVSKTEQQQRKTRNIVEENPYFR) are disordered.

This sequence belongs to the arrestin family.

The sequence is that of Arrestin domain-containing protein 15 (arrd-15) from Caenorhabditis elegans.